Reading from the N-terminus, the 225-residue chain is Ribonuclease 3 (225 aa).

The region spanning Phe-4–Asn-133 is the RNase III domain. A Mg(2+)-binding site is contributed by Glu-46. The active site involves Asp-50. 2 residues coordinate Mg(2+): Asn-119 and Glu-122. Residue Glu-122 is part of the active site. The DRBM domain occupies Asp-158 to Lys-225.

Belongs to the ribonuclease III family. In terms of assembly, homodimer. Mg(2+) is required as a cofactor.

It is found in the cytoplasm. The enzyme catalyses Endonucleolytic cleavage to 5'-phosphomonoester.. In terms of biological role, digests double-stranded RNA. Involved in the processing of primary rRNA transcript to yield the immediate precursors to the large and small rRNAs (23S and 16S). Processes some mRNAs, and tRNAs when they are encoded in the rRNA operon. Processes pre-crRNA and tracrRNA of type II CRISPR loci if present in the organism. The protein is Ribonuclease 3 of Rickettsia felis (strain ATCC VR-1525 / URRWXCal2) (Rickettsia azadi).